A 981-amino-acid polypeptide reads, in one-letter code: GPI ethanolamine phosphate transferase 1 (981 aa).

Topologically, residues 1–6 (MAGSSR) are cytoplasmic. The chain crosses the membrane as a helical span at residues 7-27 (IGFMAIAVAFHLVYILSIFDI). The Lumenal segment spans residues 28–464 (YFVSPIVTGM…LQTYDWLFLR (437 aa)). N-linked (GlcNAc...) asparagine glycans are attached at residues asparagine 148, asparagine 211, and asparagine 295. A helical transmembrane segment spans residues 465–485 (ALITIGYLGWMAYATTTVLSL). At 486 to 496 (YVVKESMSPQR) the chain is on the cytoplasmic side. The chain crosses the membrane as a helical span at residues 497 to 517 (TLLGSAFFLSLLVALYSSFII). Residues 518–519 (SK) are Lumenal-facing. A helical membrane pass occupies residues 520–540 (SPPAYYLYAFFPVLFWEEVYA). Residues 541-560 (RRANVAKGFQALFGHVKSGG) are Cytoplasmic-facing. A helical membrane pass occupies residues 561–581 (AVVALVFNVVLYLGVIQSLAL). At 582-587 (AYIHRE) the chain is on the lumenal side. Residues 588–608 (ILTGLFVLGAFWPMTQGISFL) traverse the membrane as a helical segment. Residues 609–611 (RSH) lie on the Cytoplasmic side of the membrane. A helical transmembrane segment spans residues 612-632 (LFLSMLWFFSCLAMSTFTLLP). The Lumenal portion of the chain corresponds to 633-638 (AMKVED). A helical transmembrane segment spans residues 639–659 (IPLIMAGGGLMTFVGLAYLVL). Residues 660-681 (EDFILSDVSSSKTKLKRLHTSR) lie on the Cytoplasmic side of the membrane. A helical membrane pass occupies residues 682–702 (TLLGIQVGLIILAMLVTHSSA). Topologically, residues 703-708 (TSLQAK) are lumenal. A helical membrane pass occupies residues 709–729 (LGLPKGNQIVGWFVLVTSLLM). Topologically, residues 730–744 (PLAYRLQPNSHYMHR) are cytoplasmic. A helical membrane pass occupies residues 745–767 (LAIIFLTCAPTFVILTISYEGLF). Residues 768–819 (YVAFSITLLSWVRLEYAVDAFTQEKAKKQATVAGSQQHTPSTFRPLSLSDAR) lie on the Lumenal side of the membrane. Residues 820–840 (IALFFMVLLQSAFFSTGNIAS) form a helical membrane-spanning segment. Topologically, residues 841-862 (ISSFSLESVSRLIPVFDPFSQG) are cytoplasmic. The chain crosses the membrane as a helical span at residues 863–883 (ALLILKIIIPFFLISANLGVL). The Lumenal segment spans residues 884–892 (NKRLGVAPS). The chain crosses the membrane as a helical span at residues 893–913 (AIFMVVLTASDVLTLYFFWVV). At 914–929 (KDEGSWLEIGSTITHF) the chain is on the cytoplasmic side. The chain crosses the membrane as a helical span at residues 930-950 (AIASFLCVFVAALEFVSAAFI). At 951-981 (AGIEVEDTKSAALTSASTKADEKVPPVAGAE) the chain is on the lumenal side.

This sequence belongs to the PIGG/PIGN/PIGO family. PIGN subfamily.

The protein localises to the endoplasmic reticulum membrane. Its pathway is glycolipid biosynthesis; glycosylphosphatidylinositol-anchor biosynthesis. Ethanolamine phosphate transferase involved in glycosylphosphatidylinositol-anchor biosynthesis. Transfers ethanolamine phosphate to the first alpha-1,4-linked mannose of the glycosylphosphatidylinositol precursor of GPI-anchor. This is GPI ethanolamine phosphate transferase 1 (MCD4) from Gibberella zeae (strain ATCC MYA-4620 / CBS 123657 / FGSC 9075 / NRRL 31084 / PH-1) (Wheat head blight fungus).